A 183-amino-acid polypeptide reads, in one-letter code: Gamma-crystallin N-A (183 aa).

4 Beta/gamma crystallin 'Greek key' domains span residues G6–S46, G47–K89, Y95–G136, and G138–V180.

This sequence belongs to the beta/gamma-crystallin family. As to quaternary structure, monomer.

Its function is as follows. Crystallins are the dominant structural components of the vertebrate eye lens. In Danio rerio (Zebrafish), this protein is Gamma-crystallin N-A (crygna).